The primary structure comprises 443 residues: CBL-interacting protein kinase 2 (443 aa).

The region spanning 13-267 (YEMGKLLGQG…MDKIMENPWF (255 aa)) is the Protein kinase domain. ATP-binding positions include 19–27 (LGQGTFAKV) and K42. The active-site Proton acceptor is D135. The interval 153–182 (DFGLSALADCKRQDGLLHTTCGTPAYVAPE) is activation loop. Residues 302-329 (TLEKKPSNLNAFDIISLSTGLDLSGMFE) enclose the NAF domain. A PPI region spans residues 333 to 362 (KKESKFTSTSTASTIISKIEDIAKGLRLKL).

It belongs to the protein kinase superfamily. CAMK Ser/Thr protein kinase family. SNF1 subfamily. It depends on Mn(2+) as a cofactor.

The enzyme catalyses L-seryl-[protein] + ATP = O-phospho-L-seryl-[protein] + ADP + H(+). It carries out the reaction L-threonyl-[protein] + ATP = O-phospho-L-threonyl-[protein] + ADP + H(+). Functionally, CIPK serine-threonine protein kinases interact with CBL proteins. Binding of a CBL protein to the regulatory NAF domain of CIPK protein lead to the activation of the kinase in a calcium-dependent manner. This is CBL-interacting protein kinase 2 (CIPK2) from Oryza sativa subsp. japonica (Rice).